A 412-amino-acid chain; its full sequence is Cytochrome p450 CYP199A2 (412 aa).

Residues 94–97 (RPPS) and serine 247 contribute to the substrate site. Cysteine 361 contributes to the heme binding site.

The protein belongs to the cytochrome P450 family. As to quaternary structure, interacts with the ferredoxin-like iron-sulfur protein ThcC. Heme serves as cofactor.

It localises to the cytoplasm. It carries out the reaction 4-methoxybenzoate + AH2 + O2 = 4-hydroxybenzoate + formaldehyde + A + H2O. The oxidative demethylation of 4-methoxybenzoate requires the participation of the monooxygenase CYP199A2, the ferredoxin-like protein ThcC/RPA1872 and a ferredoxin reductase to mediate the transfer of electrons from NADH to CYP199A2. It is also active with 4-ethylbenzoate. This Rhodopseudomonas palustris (strain ATCC BAA-98 / CGA009) protein is Cytochrome p450 CYP199A2.